The sequence spans 275 residues: Bifunctional protein FolD (275 aa).

Residues 161-163, serine 186, and threonine 227 contribute to the NADP(+) site; that span reads GRS.

The protein belongs to the tetrahydrofolate dehydrogenase/cyclohydrolase family. As to quaternary structure, homodimer.

It catalyses the reaction (6R)-5,10-methylene-5,6,7,8-tetrahydrofolate + NADP(+) = (6R)-5,10-methenyltetrahydrofolate + NADPH. The catalysed reaction is (6R)-5,10-methenyltetrahydrofolate + H2O = (6R)-10-formyltetrahydrofolate + H(+). The protein operates within one-carbon metabolism; tetrahydrofolate interconversion. Functionally, catalyzes the oxidation of 5,10-methylenetetrahydrofolate to 5,10-methenyltetrahydrofolate and then the hydrolysis of 5,10-methenyltetrahydrofolate to 10-formyltetrahydrofolate. The polypeptide is Bifunctional protein FolD (Parafrankia sp. (strain EAN1pec)).